The chain runs to 128 residues: Large ribosomal subunit protein bL12 (128 aa).

Positions 97–128 (GAPSTLKEGVSKEDAEEAKKQLTEAGATVEVK) are disordered. Positions 105 to 118 (GVSKEDAEEAKKQL) are enriched in basic and acidic residues.

The protein belongs to the bacterial ribosomal protein bL12 family. As to quaternary structure, homodimer. Part of the ribosomal stalk of the 50S ribosomal subunit. Forms a multimeric L10(L12)X complex, where L10 forms an elongated spine to which 2 to 4 L12 dimers bind in a sequential fashion. Binds GTP-bound translation factors.

Its function is as follows. Forms part of the ribosomal stalk which helps the ribosome interact with GTP-bound translation factors. Is thus essential for accurate translation. The polypeptide is Large ribosomal subunit protein bL12 (Lawsonia intracellularis (strain PHE/MN1-00)).